The sequence spans 374 residues: DNA replication and repair protein RecF (374 aa).

30 to 37 (GENAQGKT) is a binding site for ATP.

Belongs to the RecF family.

The protein resides in the cytoplasm. The RecF protein is involved in DNA metabolism; it is required for DNA replication and normal SOS inducibility. RecF binds preferentially to single-stranded, linear DNA. It also seems to bind ATP. The chain is DNA replication and repair protein RecF from Lactiplantibacillus plantarum (strain ATCC BAA-793 / NCIMB 8826 / WCFS1) (Lactobacillus plantarum).